Reading from the N-terminus, the 539-residue chain is Chaperonin GroEL (539 aa).

ATP contacts are provided by residues 29–32 (TLGP), 86–90 (DGTTT), Gly-412, 475–477 (NAA), and Asp-491.

The protein belongs to the chaperonin (HSP60) family. In terms of assembly, forms a cylinder of 14 subunits composed of two heptameric rings stacked back-to-back. Interacts with the co-chaperonin GroES.

The protein localises to the cytoplasm. The catalysed reaction is ATP + H2O + a folded polypeptide = ADP + phosphate + an unfolded polypeptide.. Its function is as follows. Together with its co-chaperonin GroES, plays an essential role in assisting protein folding. The GroEL-GroES system forms a nano-cage that allows encapsulation of the non-native substrate proteins and provides a physical environment optimized to promote and accelerate protein folding. This chain is Chaperonin GroEL, found in Tsukamurella tyrosinosolvens.